A 307-amino-acid chain; its full sequence is Acyl transferase (307 aa).

Residues serine 116, aspartate 213, and histidine 243 each act as charge relay system in the active site.

Belongs to the LuxD family.

Its pathway is lipid metabolism; fatty acid reduction for biolumincescence. In terms of biological role, acyl transferase is part of the fatty acid reductase system required for aldehyde biosynthesis; it produces fatty acids for the luminescent reaction. The protein is Acyl transferase of Aliivibrio fischeri (strain ATCC 700601 / ES114) (Vibrio fischeri).